Consider the following 227-residue polypeptide: Cytochrome c oxidase subunit 2 (227 aa).

At 1–14 (MAYPMQLGFQDATS) the chain is on the mitochondrial intermembrane side. Residues 15–45 (PIMEELLHFHDHTLMIVFLISSLVLYIISLM) form a helical membrane-spanning segment. Residues 46 to 59 (LTTKLTHTSTMDAQ) are Mitochondrial matrix-facing. The helical transmembrane segment at 60–87 (EVETVWTILPAIILILIALPSLRILYMM) threads the bilayer. The Mitochondrial intermembrane portion of the chain corresponds to 88–227 (DEINNPSLTV…HFEEWSASMS (140 aa)). Residues H161, C196, E198, C200, H204, and M207 each coordinate Cu cation. A Mg(2+)-binding site is contributed by E198.

The protein belongs to the cytochrome c oxidase subunit 2 family. As to quaternary structure, component of the cytochrome c oxidase (complex IV, CIV), a multisubunit enzyme composed of 14 subunits. The complex is composed of a catalytic core of 3 subunits MT-CO1, MT-CO2 and MT-CO3, encoded in the mitochondrial DNA, and 11 supernumerary subunits COX4I, COX5A, COX5B, COX6A, COX6B, COX6C, COX7A, COX7B, COX7C, COX8 and NDUFA4, which are encoded in the nuclear genome. The complex exists as a monomer or a dimer and forms supercomplexes (SCs) in the inner mitochondrial membrane with NADH-ubiquinone oxidoreductase (complex I, CI) and ubiquinol-cytochrome c oxidoreductase (cytochrome b-c1 complex, complex III, CIII), resulting in different assemblies (supercomplex SCI(1)III(2)IV(1) and megacomplex MCI(2)III(2)IV(2)). Found in a complex with TMEM177, COA6, COX18, COX20, SCO1 and SCO2. Interacts with TMEM177 in a COX20-dependent manner. Interacts with COX20. Interacts with COX16. Cu cation is required as a cofactor.

It localises to the mitochondrion inner membrane. It carries out the reaction 4 Fe(II)-[cytochrome c] + O2 + 8 H(+)(in) = 4 Fe(III)-[cytochrome c] + 2 H2O + 4 H(+)(out). In terms of biological role, component of the cytochrome c oxidase, the last enzyme in the mitochondrial electron transport chain which drives oxidative phosphorylation. The respiratory chain contains 3 multisubunit complexes succinate dehydrogenase (complex II, CII), ubiquinol-cytochrome c oxidoreductase (cytochrome b-c1 complex, complex III, CIII) and cytochrome c oxidase (complex IV, CIV), that cooperate to transfer electrons derived from NADH and succinate to molecular oxygen, creating an electrochemical gradient over the inner membrane that drives transmembrane transport and the ATP synthase. Cytochrome c oxidase is the component of the respiratory chain that catalyzes the reduction of oxygen to water. Electrons originating from reduced cytochrome c in the intermembrane space (IMS) are transferred via the dinuclear copper A center (CU(A)) of subunit 2 and heme A of subunit 1 to the active site in subunit 1, a binuclear center (BNC) formed by heme A3 and copper B (CU(B)). The BNC reduces molecular oxygen to 2 water molecules using 4 electrons from cytochrome c in the IMS and 4 protons from the mitochondrial matrix. This chain is Cytochrome c oxidase subunit 2 (MT-CO2), found in Antilocapra americana (Pronghorn).